The chain runs to 164 residues: MMSALSQAAKSLLLQDFVSAFFLSMRQFFAPKETINYPHEKGPVSPRFRGEHALRRYPNGEERCIACKLCEAICPAQAITIEAGPRRNDGTRRTVRYDIDMVKCIYCGFCQEACPVDAIVEGPNFEFATETREELYYDKDKLLANGDRWERELARNISLDAPYR.

4Fe-4S ferredoxin-type domains lie at 54–84 (LRRY…IEAG) and 95–124 (VRYD…EGPN). Residues Cys-64, Cys-67, Cys-70, Cys-74, Cys-104, Cys-107, Cys-110, and Cys-114 each contribute to the [4Fe-4S] cluster site.

It belongs to the complex I 23 kDa subunit family. In terms of assembly, NDH-1 is composed of 14 different subunits. Subunits NuoA, H, J, K, L, M, N constitute the membrane sector of the complex. The cofactor is [4Fe-4S] cluster.

It localises to the cell inner membrane. The enzyme catalyses a quinone + NADH + 5 H(+)(in) = a quinol + NAD(+) + 4 H(+)(out). Its function is as follows. NDH-1 shuttles electrons from NADH, via FMN and iron-sulfur (Fe-S) centers, to quinones in the respiratory chain. The immediate electron acceptor for the enzyme in this species is believed to be ubiquinone. Couples the redox reaction to proton translocation (for every two electrons transferred, four hydrogen ions are translocated across the cytoplasmic membrane), and thus conserves the redox energy in a proton gradient. This Mesorhizobium japonicum (strain LMG 29417 / CECT 9101 / MAFF 303099) (Mesorhizobium loti (strain MAFF 303099)) protein is NADH-quinone oxidoreductase subunit I.